The primary structure comprises 287 residues: Neugrin (287 aa).

An N-terminal signal peptide occupies residues 1–23 (MAFSPNVLLGGRVCAAVARSGFA). The tract at residues 149–169 (SIPELPGPGDSSKPLSAGQSV) is disordered. The N-linked (GlcNAc...) asparagine glycan is linked to Asn-202.

Belongs to the neugrin family. Forms a regulatory protein-RNA complex, consisting of RCC1L, NGRN, RPUSD3, RPUSD4, TRUB2, FASTKD2 and 16S mt-rRNA. Interacts with 16S mt-rRNA; this interaction is direct.

Its subcellular location is the nucleus. It localises to the secreted. It is found in the mitochondrion membrane. Plays an essential role in mitochondrial ribosome biogenesis. As a component of a functional protein-RNA module, consisting of RCC1L, NGRN, RPUSD3, RPUSD4, TRUB2, FASTKD2 and 16S mitochondrial ribosomal RNA (16S mt-rRNA), controls 16S mt-rRNA abundance and is required for intra-mitochondrial translation of core subunits of the oxidative phosphorylation system. The sequence is that of Neugrin (NGRN) from Bos taurus (Bovine).